Reading from the N-terminus, the 183-residue chain is Large ribosomal subunit protein uL5 (183 aa).

It belongs to the universal ribosomal protein uL5 family. Part of the 50S ribosomal subunit; part of the 5S rRNA/L5/L18/L25 subcomplex. Contacts the 5S rRNA and the P site tRNA. Forms a bridge to the 30S subunit in the 70S ribosome.

This is one of the proteins that bind and probably mediate the attachment of the 5S RNA into the large ribosomal subunit, where it forms part of the central protuberance. In the 70S ribosome it contacts protein S13 of the 30S subunit (bridge B1b), connecting the 2 subunits; this bridge is implicated in subunit movement. Contacts the P site tRNA; the 5S rRNA and some of its associated proteins might help stabilize positioning of ribosome-bound tRNAs. In Leptospira biflexa serovar Patoc (strain Patoc 1 / Ames), this protein is Large ribosomal subunit protein uL5.